The chain runs to 326 residues: Beta-ketoacyl-[acyl-carrier-protein] synthase III (326 aa).

Active-site residues include Cys-113 and His-253. Residues 254–258 form an ACP-binding region; it reads QANIR. Asn-283 is a catalytic residue.

The protein belongs to the thiolase-like superfamily. FabH family. As to quaternary structure, homodimer.

The protein localises to the cytoplasm. It catalyses the reaction malonyl-[ACP] + acetyl-CoA + H(+) = 3-oxobutanoyl-[ACP] + CO2 + CoA. It participates in lipid metabolism; fatty acid biosynthesis. Functionally, catalyzes the condensation reaction of fatty acid synthesis by the addition to an acyl acceptor of two carbons from malonyl-ACP. Catalyzes the first condensation reaction which initiates fatty acid synthesis and may therefore play a role in governing the total rate of fatty acid production. Possesses both acetoacetyl-ACP synthase and acetyl transacylase activities. Its substrate specificity determines the biosynthesis of branched-chain and/or straight-chain of fatty acids. This is Beta-ketoacyl-[acyl-carrier-protein] synthase III from Wolbachia sp. subsp. Brugia malayi (strain TRS).